We begin with the raw amino-acid sequence, 172 residues long: DCC family protein At1g52590, chloroplastic (172 aa).

A chloroplast-targeting transit peptide spans 1–25; that stretch reads MAILIPASFGRLTITSRAQVRVRVS.

Belongs to the DCC thiol-disulfide oxidoreductase family.

Its subcellular location is the plastid. It is found in the chloroplast. The protein is DCC family protein At1g52590, chloroplastic of Arabidopsis thaliana (Mouse-ear cress).